The following is a 144-amino-acid chain: Large ribosomal subunit protein uL13 (144 aa).

Belongs to the universal ribosomal protein uL13 family. In terms of assembly, part of the 50S ribosomal subunit.

In terms of biological role, this protein is one of the early assembly proteins of the 50S ribosomal subunit, although it is not seen to bind rRNA by itself. It is important during the early stages of 50S assembly. The protein is Large ribosomal subunit protein uL13 of Nitratidesulfovibrio vulgaris (strain DSM 19637 / Miyazaki F) (Desulfovibrio vulgaris).